Consider the following 355-residue polypeptide: Ubiquinone biosynthesis protein COQ4 homolog, mitochondrial (355 aa).

Zn(2+) contacts are provided by His-134, Asp-135, His-138, and Glu-150.

This sequence belongs to the COQ4 family. As to quaternary structure, component of a multi-subunit COQ enzyme complex. The cofactor is Zn(2+).

It is found in the mitochondrion inner membrane. It catalyses the reaction a 4-hydroxy-3-methoxy-5-(all-trans-polyprenyl)benzoate + H(+) = a 2-methoxy-6-(all-trans-polyprenyl)phenol + CO2. It functions in the pathway cofactor biosynthesis; ubiquinone biosynthesis. Lyase that catalyzes the C1-decarboxylation of 4-hydroxy-3-methoxy-5-(all-trans-polyprenyl)benzoic acid into 2-methoxy-6-(all-trans-polyprenyl)phenol during ubiquinone biosynthesis. This Plasmodium yoelii yoelii protein is Ubiquinone biosynthesis protein COQ4 homolog, mitochondrial.